A 561-amino-acid chain; its full sequence is Transcription factor Clamp (561 aa).

The segment at 127-149 (FKCDVCSDMFPHLALLNAHKRMH) adopts a C2H2-type 1 zinc-finger fold. 4 residues coordinate Zn(2+): cysteine 129, cysteine 132, histidine 145, and histidine 149. The segment at 290-315 (TGGTTPKREASSGSGHHPVKKRNSQQ) is disordered. C2H2-type zinc fingers lie at residues 360-382 (FSCN…KKLH), 388-410 (YKCS…ARIH), 416-438 (YKCQ…ERTH), 444-466 (YVCG…RRIH), 472-494 (YKCE…AKVH), and 500-522 (YKCE…RGIH).

In terms of assembly, homodimer. Interacts with msl-2; promoting recruitment of the male-specific lethal (MSL) histone acetyltransferase complex to chromatin. Interacts with Nelf-A. Interacts with NELF-B.

The protein resides in the nucleus. It localises to the chromosome. Transcription factor involved in X-chromosome dosage compensation in males, the process by which transcription of the single X chromosome in the male is elevated. Binds to the DNA sequence (GA)n. Clamp-binding promotes nucleosome depletion and chromatin accessibility, thereby allowing access to other transcription factors. Specifically binds to cis-acting elements on the X-chromosome named chromatin entry sites and promotes recruitment of the male-specific lethal (MSL) histone acetyltransferase complex, which associates with actively transcribed genes on the male X-chromosome to upregulate their expression. Mechanistically, acts by promoting chromatin accessibility at chromatin entry sites, facilitating DNA-binding of msl-2, followed by MSL complex recruitment. In addition to dosage compensation, also involved in zygotic genome activation (ZGA), a critical event in early embryonic development during which the developmental control passes from maternally provided mRNAs to the expression of the zygotic genome after fertilization. Maternally-provided protein cooperates with Zelda (zld) to activate zygotic transcription by increasing chromatin accessibility at promoters of specific genes and facilitate zld occupancy at a subset of key embryonic promoters. Also acts as an activator of gypsy chromatin insulator function by promoting binding of Cp190 to chromatin. The chain is Transcription factor Clamp from Drosophila melanogaster (Fruit fly).